Consider the following 904-residue polypeptide: MICAL-like protein 2 (904 aa).

In terms of domain architecture, Calponin-homology (CH) spans 1 to 107; sequence MAAIRALQQW…YVSQYYNYFH (107 aa). The interval 1–260 is forms an intramolecular interaction with the C-terminal coiled coil domain keeping the protein in a closed conformation; it reads MAAIRALQQW…KLTGLVPRQP (260 aa). 3 positions are modified to phosphoserine: Ser-110, Ser-143, and Ser-153. Positions 117–178 are disordered; that stretch reads GVKRASEDSE…GGPPPKTDQA (62 aa). Positions 143-153 are enriched in pro residues; sequence SPAPARKPPLS. Residues 186-248 form the LIM zinc-binding domain; sequence STCGVCGKHV…TSHLPAAASA (63 aa). Ser-249 is subject to Phosphoserine. The segment at 251–722 is disordered; the sequence is KLTGLVPRQP…PANVPALPGE (472 aa). The segment at 261 to 388 is necessary and sufficient for interaction with actinins; it reads GAMGVDSRTS…GGAPRVAAPQ (128 aa). The interval 261–697 is mediates targeting to the cell plasma membrane; the sequence is GAMGVDSRTS…EARVQSWKEE (437 aa). Polar residues predominate over residues 267-277; that stretch reads SRTSCSPQKAQ. Low complexity-rich tracts occupy residues 293–314 and 349–362; these read NSPA…ATSV and SSAA…ASHP. Ser-294 bears the Phosphoserine mark. A compositionally biased stretch (pro residues) spans 363-374; the sequence is AVPPSAPDPRPA. The span at 385–400 shows a compositional bias: low complexity; sequence AAPQTTLSSSSTSAAT. Residues 408–433 are compositionally biased toward polar residues; sequence PSASRTQQARNKFFQTSAVPPGTSLS. A compositionally biased stretch (low complexity) spans 459 to 480; sequence ALSALEEAGAPAPGRPSPATAA. Ser-494 and Ser-504 each carry phosphoserine. 2 stretches are compositionally biased toward low complexity: residues 520 to 534 and 542 to 553; these read LSTS…LPPA and SSGVGRVGAGSR. Residues 564 to 578 are compositionally biased toward polar residues; that stretch reads KSTTLTQDMSTSLQE. Positions 593–622 are enriched in basic and acidic residues; that stretch reads PVDRRSPAERTLKPKEPRALAEPRAGEAPR. A Phosphoserine modification is found at Ser-598. Thr-644 carries the post-translational modification Phosphothreonine. The segment covering 647 to 661 has biased composition (pro residues); sequence PASPGPSLPARSPSP. Phosphoserine is present on residues Ser-649, Ser-658, Ser-660, and Ser-726. The tract at residues 698 to 807 is forms an intramolecular interaction with the N-terminal Calponin-homology and LIM zinc-binding domains-containing region keeping the protein in a closed conformation; sequence EKKPHLQGKP…LMYKSKAQRL (110 aa). The 152-residue stretch at 723–874 folds into the bMERB domain; sequence TVTSPVRLHP…EQEEDQMLRD (152 aa). Residues 735 to 771 adopt a coiled-coil conformation; the sequence is LSPEEIQRQLQDIERRLDALELRGVELEKRLRAAEGD. The mediates interaction with RAB13 and is required for transition from the closed to the opened conformation stretch occupies residues 807–903; it reads LEEQQLDIEG…WSPKSKSSPS (97 aa).

In terms of assembly, interacts with RAB13 (GTP-bound form); competes with RAB8A and is involved in tight junctions assembly. Interacts with RAB8A; competes with RAB13 and is involved in E-cadherin endocytic recycling. Interacts with RAB8B. Interacts (preferentially in opened conformation) with ACTN1 and ACTN4; stimulated by RAB13 activation. Interacts (via calponin-homology (CH) domain) with the filamins FLNA, FLNB and FLNC (via actin-binding domain).

The protein localises to the cell membrane. The protein resides in the cell junction. It is found in the tight junction. It localises to the recycling endosome. Its subcellular location is the cell projection. The protein localises to the cytoplasm. The protein resides in the cytoskeleton. Functionally, effector of small Rab GTPases which is involved in junctional complexes assembly through the regulation of cell adhesion molecules transport to the plasma membrane and actin cytoskeleton reorganization. Regulates the endocytic recycling of occludins, claudins and E-cadherin to the plasma membrane and may thereby regulate the establishment of tight junctions and adherens junctions. In parallel, may regulate actin cytoskeleton reorganization directly through interaction with F-actin or indirectly through actinins and filamins. Most probably involved in the processes of epithelial cell differentiation, cell spreading and neurite outgrowth. Undergoes liquid-liquid phase separation to form tubular recycling endosomes. Plays 2 sequential roles in the biogenesis of tubular recycling endosomes: first organizes phase separation and then the closed form formed by interaction with RAB8A promotes endosomal tubulation. The chain is MICAL-like protein 2 from Homo sapiens (Human).